The chain runs to 297 residues: MAVLFLLLFLCGTPQAADNMQAIYVALGEAVELPCPSPPTLHGDEHLSWFCSPAAGSFTTLVAQVQVGRPAPDPGKPGRESRLRLLGNYSLWLEGSKEEDAGRYWCAVLGQHHNYQNWRVYDVLVLKGSQLSARAADGSPCNVLLCSVVPSRRMDSVTWQEGKGPVRGRVQSFWGSEAALLLVCPGEGLSEPRSRRPRIIRCLMTHNKGVSFSLAASIDASPALCAPSTGWDMPWILMLLLTMGQGVVILALSIVLWRQRVRGAPGRDASIPQFKPEIQVYENIHLARLGPPAHKPR.

Residues 1-16 (MAVLFLLLFLCGTPQA) form the signal peptide. One can recognise an Ig-like V-type domain in the interval 17-122 (ADNMQAIYVA…HNYQNWRVYD (106 aa)). The Extracellular segment spans residues 17 to 235 (ADNMQAIYVA…APSTGWDMPW (219 aa)). Cysteines 35 and 106 form a disulfide. Asparagine 88 carries an N-linked (GlcNAc...) asparagine glycan. A helical transmembrane segment spans residues 236–256 (ILMLLLTMGQGVVILALSIVL). At 257–297 (WRQRVRGAPGRDASIPQFKPEIQVYENIHLARLGPPAHKPR) the chain is on the cytoplasmic side. Position 281 is a phosphotyrosine (tyrosine 281).

In terms of assembly, homodimer; disulfide-linked. Interacts with GRB2 and GRB7 in a phosphorylation-dependent manner. In terms of processing, N-glycosylated.

It localises to the cell membrane. In terms of biological role, may play a role in the downstream signal transduction pathways involving GRB2 and GRB7. The sequence is that of Lymphocyte antigen 6 complex locus protein G6f (LY6G6F) from Homo sapiens (Human).